A 308-amino-acid chain; its full sequence is 4-diphosphocytidyl-2-C-methyl-D-erythritol kinase (308 aa).

Lys-24 is a catalytic residue. Position 118–128 (118–128 (PVGAGMAGGSA)) interacts with ATP. Asp-160 is a catalytic residue.

Belongs to the GHMP kinase family. IspE subfamily.

It carries out the reaction 4-CDP-2-C-methyl-D-erythritol + ATP = 4-CDP-2-C-methyl-D-erythritol 2-phosphate + ADP + H(+). It participates in isoprenoid biosynthesis; isopentenyl diphosphate biosynthesis via DXP pathway; isopentenyl diphosphate from 1-deoxy-D-xylulose 5-phosphate: step 3/6. Catalyzes the phosphorylation of the position 2 hydroxy group of 4-diphosphocytidyl-2C-methyl-D-erythritol. The sequence is that of 4-diphosphocytidyl-2-C-methyl-D-erythritol kinase from Bifidobacterium adolescentis (strain ATCC 15703 / DSM 20083 / NCTC 11814 / E194a).